Reading from the N-terminus, the 97-residue chain is Co-chaperonin GroES (97 aa).

Belongs to the GroES chaperonin family. In terms of assembly, heptamer of 7 subunits arranged in a ring. Interacts with the chaperonin GroEL.

The protein resides in the cytoplasm. Functionally, together with the chaperonin GroEL, plays an essential role in assisting protein folding. The GroEL-GroES system forms a nano-cage that allows encapsulation of the non-native substrate proteins and provides a physical environment optimized to promote and accelerate protein folding. GroES binds to the apical surface of the GroEL ring, thereby capping the opening of the GroEL channel. This is Co-chaperonin GroES from Salmonella agona (strain SL483).